A 345-amino-acid chain; its full sequence is N-acetyl-gamma-glutamyl-phosphate reductase (345 aa).

C149 is an active-site residue.

Belongs to the NAGSA dehydrogenase family. Type 1 subfamily.

It localises to the cytoplasm. The enzyme catalyses N-acetyl-L-glutamate 5-semialdehyde + phosphate + NADP(+) = N-acetyl-L-glutamyl 5-phosphate + NADPH + H(+). It functions in the pathway amino-acid biosynthesis; L-arginine biosynthesis; N(2)-acetyl-L-ornithine from L-glutamate: step 3/4. In terms of biological role, catalyzes the NADPH-dependent reduction of N-acetyl-5-glutamyl phosphate to yield N-acetyl-L-glutamate 5-semialdehyde. The chain is N-acetyl-gamma-glutamyl-phosphate reductase from Bacillus subtilis (strain 168).